A 338-amino-acid polypeptide reads, in one-letter code: Inositol 2-dehydrogenase 4 (338 aa).

The protein belongs to the Gfo/Idh/MocA family. As to quaternary structure, homotetramer.

It carries out the reaction myo-inositol + NAD(+) = scyllo-inosose + NADH + H(+). Involved in the oxidation of myo-inositol (MI) to 2-keto-myo-inositol (2KMI or 2-inosose). This is Inositol 2-dehydrogenase 4 from Saccharopolyspora erythraea (strain ATCC 11635 / DSM 40517 / JCM 4748 / NBRC 13426 / NCIMB 8594 / NRRL 2338).